Consider the following 121-residue polypeptide: MTQSTEDTLLRLAAVIDSRKGGDPEQSYVSRLFHKGDDAVLKKIGEEATEVVLAAKDVRQGGAPTALVGEVADLWFHCLVMLSHFDLSPADVIAELERREGLSGIEEKALRKRREREANGG.

The protein belongs to the PRA-PH family.

The protein resides in the cytoplasm. It carries out the reaction 1-(5-phospho-beta-D-ribosyl)-ATP + H2O = 1-(5-phospho-beta-D-ribosyl)-5'-AMP + diphosphate + H(+). The protein operates within amino-acid biosynthesis; L-histidine biosynthesis; L-histidine from 5-phospho-alpha-D-ribose 1-diphosphate: step 2/9. The sequence is that of Phosphoribosyl-ATP pyrophosphatase from Burkholderia vietnamiensis (strain G4 / LMG 22486) (Burkholderia cepacia (strain R1808)).